The sequence spans 709 residues: Mucin-20 (709 aa).

The signal sequence occupies residues 1-25 (MGCLWGLALPLFFFCWEVGVSGSSA). Positions 57 to 69 (TQTLSAETSSRAS) are enriched in polar residues. Disordered stretches follow at residues 57–92 (TQTL…ARET) and 170–403 (KGLS…WSPG). Residues 78–92 (AETRGAKRISPARET) show a composition bias toward basic and acidic residues. Composition is skewed to low complexity over residues 173-182 (SSESSASSDS), 190-199 (SRASESSASS), 209-218 (SRASESSASS), 228-237 (SRASESSASS), 247-256 (SRASESSASS), 266-275 (SRASESSASS), 285-294 (SRASESSASS), 304-313 (SRASESSASS), 323-332 (SRASESSASS), 342-351 (SRASESSASS), 361-370 (SRASESSASS), and 380-389 (SRASESSASS). Tandem repeats lie at residues 173–192 (SSES…PSRA), 193–211 (SESS…PSRA), 212–230 (SESS…PSRA), 231–249 (SESS…PSRA), 250–268 (SESS…PSRA), 269–287 (SESS…PSRA), 288–306 (SESS…PSRA), 307–325 (SESS…PSRA), 326–344 (SESS…PSRA), 345–363 (SESS…PSRA), and 364–382 (SESS…PSRA). Residues 173–400 (SSESSASSDS…GPHPVITPSW (228 aa)) form a 12 X 20 AA approximate tandem repeats of S-S-E-S-S-A-S-S-D-S-P-H-P-V-I-T-P-S-R-A region. The 12; approximate repeat unit spans residues 383-400 (SESSASSDGPHPVITPSW). N-linked (GlcNAc...) asparagine glycosylation is present at Asn423. Disordered regions lie at residues 434–515 (SSIP…APGA) and 583–657 (NFTP…VSAG). Positions 450-656 (VKASSTSDPP…RTRPTTDVSA (207 aa)) are involved in oligomerization. A compositionally biased stretch (polar residues) spans 474–489 (VTASAETLSTAGTTES). The segment covering 613 to 652 (TTTNSSRGTNSTLAKITTSAKTTMKPPTATPTTARTRPTT) has biased composition (low complexity). Residues Asn616 and Asn622 are each glycosylated (N-linked (GlcNAc...) asparagine). Residues 657–709 (GENGGFLLLRLSVASPEDLTDPRVAERLMQQLHRELHAHAPHFQVSLLRVRRG) form an interaction with MET region.

Interacts with MET; oligomerization increases affinity for MET. Highly expressed in kidney, moderately in placenta, lung, prostate, liver, and digestive system. In the kidney, localized in the proximal tubules but not in the glomerulus or distal tubules. Detected in most of the male urogenital tract epithelia, with the exception of epididymis.

It is found in the secreted. The protein localises to the apical cell membrane. The protein resides in the basolateral cell membrane. It localises to the cell projection. Its subcellular location is the microvillus membrane. In terms of biological role, may regulate MET signaling cascade. Seems to decrease hepatocyte growth factor (HGF)-induced transient MAPK activation. Blocks GRB2 recruitment to MET thus suppressing the GRB2-RAS pathway. Inhibits HGF-induced proliferation of MMP1 and MMP9 expression. In Homo sapiens (Human), this protein is Mucin-20 (MUC20).